Here is a 239-residue protein sequence, read N- to C-terminus: Adapter protein MecA (239 aa).

The span at 118 to 128 (EQRTKEKEAQG) shows a compositional bias: basic and acidic residues. The tract at residues 118-137 (EQRTKEKEAQGSKRQKSSAR) is disordered.

Belongs to the MecA family. As to quaternary structure, homodimer.

Enables the recognition and targeting of unfolded and aggregated proteins to the ClpC protease or to other proteins involved in proteolysis. This chain is Adapter protein MecA, found in Staphylococcus aureus (strain bovine RF122 / ET3-1).